We begin with the raw amino-acid sequence, 250 residues long: MSNDPTHQFLVNKIVSIDIGGIDFSFTNASLFMVATVGAAAGFLYLTTSQRGLIPTRMQSVSEMSYEFIASMLREGAGSQGMKFFPMVFSLFMFILTANLLGMVPYFFTVTSQIIVTFALAVFVIGTVILYGFYKHGFGFLKLFVPHGVPGALLPLVVAIEIISFLSRPISLSVRLFANMLAGHITLKVFAGFVASLSAFGALGIGGAILPLIMTVALTGLEFLVAFLQAYVFAVLTCMYLNDAVHPGSH.

Helical transmembrane passes span 26-46 (FTNA…FLYL), 84-104 (FFPM…LGMV), 114-134 (IIVT…YGFY), 143-163 (LFVP…IEII), 193-213 (FVAS…LPLI), and 216-236 (VALT…FAVL).

The protein belongs to the ATPase A chain family. As to quaternary structure, F-type ATPases have 2 components, CF(1) - the catalytic core - and CF(0) - the membrane proton channel. CF(1) has five subunits: alpha(3), beta(3), gamma(1), delta(1), epsilon(1). CF(0) has three main subunits: a(1), b(2) and c(9-12). The alpha and beta chains form an alternating ring which encloses part of the gamma chain. CF(1) is attached to CF(0) by a central stalk formed by the gamma and epsilon chains, while a peripheral stalk is formed by the delta and b chains.

Its subcellular location is the cell inner membrane. In terms of biological role, key component of the proton channel; it plays a direct role in the translocation of protons across the membrane. This is ATP synthase subunit a from Sinorhizobium medicae (strain WSM419) (Ensifer medicae).